A 325-amino-acid polypeptide reads, in one-letter code: DNA repair and recombination protein RadA (325 aa).

107–114 (GEFGSGKT) lines the ATP pocket.

Belongs to the eukaryotic RecA-like protein family.

Functionally, involved in DNA repair and in homologous recombination. Binds and assemble on single-stranded DNA to form a nucleoprotein filament. Hydrolyzes ATP in a ssDNA-dependent manner and promotes DNA strand exchange between homologous DNA molecules. The polypeptide is DNA repair and recombination protein RadA (Methanosarcina acetivorans (strain ATCC 35395 / DSM 2834 / JCM 12185 / C2A)).